A 117-amino-acid polypeptide reads, in one-letter code: Ubiquitin-like protein pmt3/smt3 (117 aa).

Residues 1–37 form a disordered region; it reads MSESPSANISDADKSAITPTTGDTSQQDVKPSTEHIN. Positions 17–30 are enriched in polar residues; the sequence is ITPTTGDTSQQDVK. Residues 35–115 form the Ubiquitin-like domain; the sequence is HINLKVVGQD…LEQLGGCTHL (81 aa). Gly-111 is covalently cross-linked (Glycyl lysine isopeptide (Gly-Lys) (interchain with K-? in acceptor proteins)). The propeptide occupies 112-117; sequence CTHLCL.

The protein belongs to the ubiquitin family. SUMO subfamily. As to quaternary structure, interacts with rfp1.

It is found in the nucleus. In terms of biological role, required for chromosome segregation where it may be involved in microtubule assembly. Loss of smt3 leads to an increase in telomere length. The chain is Ubiquitin-like protein pmt3/smt3 (pmt3) from Schizosaccharomyces pombe (strain 972 / ATCC 24843) (Fission yeast).